Reading from the N-terminus, the 23-residue chain is Septenin 2c (23 aa).

As to expression, expressed in skin granular glands.

The protein resides in the secreted. May act as an antimicrobial peptide. The protein is Septenin 2c of Osteopilus septentrionalis (Cuban treefrog).